We begin with the raw amino-acid sequence, 180 residues long: uncharacterized protein (180 aa).

Residues 3–33 (QQQSNNSNDNKEQLDRVIESLNRVNSETKQI) are a coiled coil.

This is an uncharacterized protein from Acanthamoeba polyphaga (Amoeba).